Consider the following 150-residue polypeptide: Large ribosomal subunit protein bL9 (150 aa).

It belongs to the bacterial ribosomal protein bL9 family.

In terms of biological role, binds to the 23S rRNA. The polypeptide is Large ribosomal subunit protein bL9 (Pseudoalteromonas translucida (strain TAC 125)).